A 133-amino-acid chain; its full sequence is UPF0102 protein Anae109_1947 (133 aa).

This sequence belongs to the UPF0102 family.

This is UPF0102 protein Anae109_1947 from Anaeromyxobacter sp. (strain Fw109-5).